Consider the following 492-residue polypeptide: Glutamyl-tRNA(Gln) amidotransferase subunit A (492 aa).

Residues K79 and S154 each act as charge relay system in the active site. The Acyl-ester intermediate role is filled by S178.

It belongs to the amidase family. GatA subfamily. In terms of assembly, heterotrimer of A, B and C subunits.

The enzyme catalyses L-glutamyl-tRNA(Gln) + L-glutamine + ATP + H2O = L-glutaminyl-tRNA(Gln) + L-glutamate + ADP + phosphate + H(+). Its function is as follows. Allows the formation of correctly charged Gln-tRNA(Gln) through the transamidation of misacylated Glu-tRNA(Gln) in organisms which lack glutaminyl-tRNA synthetase. The reaction takes place in the presence of glutamine and ATP through an activated gamma-phospho-Glu-tRNA(Gln). This Acinetobacter baylyi (strain ATCC 33305 / BD413 / ADP1) protein is Glutamyl-tRNA(Gln) amidotransferase subunit A.